The sequence spans 532 residues: Wee1-like protein kinase 2 (532 aa).

Residues 123–166 are disordered; it reads INPFTPDTVRRNSEHYKRKSQRSDDDEDYGPRSKEIQNSSEDES. Residues 188-465 enclose the Protein kinase domain; sequence FLELACIGVG…RHDVLCKERA (278 aa). Residues 194-202 and K217 contribute to the ATP site; that span reads IGVGEFGSV. Residue D315 is the Proton acceptor of the active site. N320 and D354 together coordinate Mg(2+). Positions 469–495 form a coiled coil; it reads ATQLRKELNVEKFRTAMLERELKEARL.

The protein belongs to the protein kinase superfamily. Ser/Thr protein kinase family. WEE1 subfamily.

It localises to the nucleus. It carries out the reaction L-tyrosyl-[protein] + ATP = O-phospho-L-tyrosyl-[protein] + ADP + H(+). Its function is as follows. Oocyte-specific protein tyrosine kinase that phosphorylates and inhibits cdk1 and acts as a key regulator of meiosis. Required to maintain meiotic arrest in oocytes by phosphorylating cdk1 at 'Tyr-15', leading to inhibit cdk1 activity and prevent meiotic reentry. This Danio rerio (Zebrafish) protein is Wee1-like protein kinase 2 (wee2).